Consider the following 298-residue polypeptide: GTPase Era (298 aa).

The 168-residue stretch at 4-171 (KSGFVSIVGR…VEGIFELLPE (168 aa)) folds into the Era-type G domain. Positions 12 to 19 (GRPNVGKS) are G1. 12 to 19 (GRPNVGKS) serves as a coordination point for GTP. Residues 38–42 (QTTRN) form a G2 region. Positions 59 to 62 (DTPG) are G3. Residues 59-63 (DTPGV) and 121-124 (NKID) contribute to the GTP site. A G4 region spans residues 121–124 (NKID). The tract at residues 150–152 (ISA) is G5. A KH type-2 domain is found at 202-280 (TREEIPHSVA…YLDLWVKVKE (79 aa)).

Belongs to the TRAFAC class TrmE-Era-EngA-EngB-Septin-like GTPase superfamily. Era GTPase family. Monomer.

The protein localises to the cytoplasm. The protein resides in the cell membrane. Functionally, an essential GTPase that binds both GDP and GTP, with rapid nucleotide exchange. Plays a role in 16S rRNA processing and 30S ribosomal subunit biogenesis and possibly also in cell cycle regulation and energy metabolism. This is GTPase Era from Carboxydothermus hydrogenoformans (strain ATCC BAA-161 / DSM 6008 / Z-2901).